The primary structure comprises 1011 residues: Antigenic heat-stable 120 kDa protein (1011 aa).

3 disordered regions span residues 1–37 (DTSE…TPAL), 54–73 (TPSM…TSDP), and 348–396 (GQSK…PQSQ). The segment covering 12 to 27 (EYTEEQKQTEEQEQKE) has biased composition (basic and acidic residues). Polar residues-rich tracts occupy residues 348 to 373 (GQSK…QYKQ) and 380 to 396 (PTNQ…PQSQ).

It localises to the cytoplasm. The protein is Antigenic heat-stable 120 kDa protein (sca4) of Rickettsia sibirica subsp. mongolitimonae (Rickettsia mongolotimonae).